The primary structure comprises 100 residues: MISQERFLKVLLSPHISEKSSISMEKFNTVVLKVSRNTTKNEIKFAVQNLFNIQVESVKTVYVKGKKKRQSNRIIYRSDWKKAYIKVKKGQNLDFMSNIE.

This sequence belongs to the universal ribosomal protein uL23 family. Part of the 50S ribosomal subunit. Contacts protein L29, and trigger factor when it is bound to the ribosome.

Its function is as follows. One of the early assembly proteins it binds 23S rRNA. One of the proteins that surrounds the polypeptide exit tunnel on the outside of the ribosome. Forms the main docking site for trigger factor binding to the ribosome. The protein is Large ribosomal subunit protein uL23 of Buchnera aphidicola subsp. Schizaphis graminum (strain Sg).